The chain runs to 378 residues: Quinolinate synthase (378 aa).

Iminosuccinate is bound by residues His-59 and Ser-80. Position 125 (Cys-125) interacts with [4Fe-4S] cluster. Residues 151-153 (YAN) and Ser-168 contribute to the iminosuccinate site. Cys-212 contributes to the [4Fe-4S] cluster binding site. Iminosuccinate contacts are provided by residues 238 to 240 (HPE) and Thr-255. Cys-309 contributes to the [4Fe-4S] cluster binding site.

It belongs to the quinolinate synthase family. Type 1 subfamily. It depends on [4Fe-4S] cluster as a cofactor.

It localises to the cytoplasm. It carries out the reaction iminosuccinate + dihydroxyacetone phosphate = quinolinate + phosphate + 2 H2O + H(+). Its pathway is cofactor biosynthesis; NAD(+) biosynthesis; quinolinate from iminoaspartate: step 1/1. Catalyzes the condensation of iminoaspartate with dihydroxyacetone phosphate to form quinolinate. In Burkholderia thailandensis (strain ATCC 700388 / DSM 13276 / CCUG 48851 / CIP 106301 / E264), this protein is Quinolinate synthase.